A 148-amino-acid polypeptide reads, in one-letter code: Hemoglobin subunit beta-A (148 aa).

The Globin domain maps to 3 to 148 (DWTDAERAAI…VVSALGRQYH (146 aa)). Residues His-64 and His-93 each contribute to the heme b site.

Belongs to the globin family. As to quaternary structure, heterotetramer of two alpha chains and two beta chains. As to expression, red blood cells.

Functionally, involved in oxygen transport from gills to the various peripheral tissues. In Seriola quinqueradiata (Five-ray yellowtail), this protein is Hemoglobin subunit beta-A (hbb1).